The following is a 955-amino-acid chain: MTRKNTTTNPWAKFHGPNLGYVIEQYDLYVTGAGSVDPELQELFEIFGAPSFQDDVVTGDNTATHFSPQNTGNIEKILKVVQLVEQIRSFGHTLAHINPMEDAANGQSLLERAMNELSDADLKAIPAKTVWQDAPEGIHTALDVIHRLKEVYTQSLAYEFSHIQDSEERAWLHQMVESNSLRQPLSNKKRTALLKRLTAVEGFEQFLHKTFVGQKRFSIEGVDMLVPVLDEIVLEGAKNGVEDVMIGMAHRGRLSVLAHVLEKPYSHMFAEFKHAKIEGAVANSGWTGDVKYHLGREQVVSNEEVSTRVTLANNPSHLEFVNPVVEGFARAAQENRKKSGLPEQDTSKSFVILVHGDAAFPGQGIVSETLNLSRLNAYQTGGTIHVIANNAVGFTTDSYDSRSTKYSSDLAKGFDIPIVHVNADDPEACLAAANLAIQYRMLFKKDFLIDLIGYRRYGHNEMDDPAVTQPQVYKKIKNHPTVRAIYADQLQAAGVLNADEIETITQFTQEQLKSDYAQVPPADTSDATIHVKVPDVVAKGIQPIDTGVELDSLRAINEGLLSWPEGFNVYPKVKKILERRKDALEENGKIEWALAESLAFASILQEGTPIRLTGQDSQRGTFAHRHIVLHDTDTNETYSPLHRLPNINASFSVHNSPLSEAAVVGYEYGYNVFAPETLVMWEAQYGDFSNTAQALFDQYVSAGRAKWGQKSGLVLLLPHGYEGQGPEHSSARPERFLQLAAENNWTVANLTSAAQYFHILRRQASILGTEAVRPLVLMTPKSLLRHPLTLSTASQLSEGRFQPALEQENLGTKPNKVKRLVLSTGKMAIDLAAEIESGKHEYNLDEIHIVRIEQLYPFPAEKVQSIIKRFKNLEEIIWVQEEPRNMGAWHYMAPILFELAGDKVKTGYIGRPDRSSPSGGDPFAHKAEQELIVAHALDVKYNFRQDKLEIEVFSN.

Belongs to the alpha-ketoglutarate dehydrogenase family. Homodimer. Part of the 2-oxoglutarate dehydrogenase (OGDH) complex composed of E1 (2-oxoglutarate dehydrogenase), E2 (dihydrolipoamide succinyltransferase) and E3 (dihydrolipoamide dehydrogenase); the complex contains multiple copies of the three enzymatic components (E1, E2 and E3). It depends on thiamine diphosphate as a cofactor.

The enzyme catalyses N(6)-[(R)-lipoyl]-L-lysyl-[protein] + 2-oxoglutarate + H(+) = N(6)-[(R)-S(8)-succinyldihydrolipoyl]-L-lysyl-[protein] + CO2. E1 component of the 2-oxoglutarate dehydrogenase (OGDH) complex which catalyzes the decarboxylation of 2-oxoglutarate, the first step in the conversion of 2-oxoglutarate to succinyl-CoA and CO(2). In Bacillus cereus (strain ZK / E33L), this protein is 2-oxoglutarate dehydrogenase E1 component.